We begin with the raw amino-acid sequence, 237 residues long: tRNA (guanine-N(1)-)-methyltransferase (237 aa).

S-adenosyl-L-methionine is bound by residues Gly-115 and 134 to 139; that span reads LGDFVL.

The protein belongs to the RNA methyltransferase TrmD family. As to quaternary structure, homodimer.

It localises to the cytoplasm. The catalysed reaction is guanosine(37) in tRNA + S-adenosyl-L-methionine = N(1)-methylguanosine(37) in tRNA + S-adenosyl-L-homocysteine + H(+). Functionally, specifically methylates guanosine-37 in various tRNAs. This is tRNA (guanine-N(1)-)-methyltransferase from Synechococcus sp. (strain RCC307).